Consider the following 242-residue polypeptide: Galectin-3 (242 aa).

The interval Met1–Gly35 is disordered. Ala2 is subject to N-acetylalanine. Ser6 carries the phosphoserine; by CK1 modification. Ser12 bears the Phosphoserine mark. Over residues Pro17–Ala31 the composition is skewed to low complexity. Tandem repeats lie at residues Gly35–Gly43, Ala44–Ala52, Tyr53–Pro61, and Tyr62–Ala70. The interval Gly35–Pro98 is 7 X 9 AA tandem repeats of Y-P-G-X(3)-P-[GS]-A. Residues Gly55–Tyr93 are disordered. One copy of the 5; approximate repeat lies at Tyr71–Ala80. Positions Ala80–Tyr93 are enriched in low complexity. One copy of the 6; approximate repeat lies at Tyr81–Ala92. The stretch at Tyr93–Pro98 is one 7; truncated repeat. One can recognise a Galectin domain in the interval Tyr110 to Ala240. Position 173–181 (Trp173–Thr181) interacts with a beta-D-galactoside. A Nuclear export signal motif is present at residues Arg218–Gln233.

In terms of assembly, probably forms homo- or heterodimers. Interacts with DMBT1. Interacts with CD6 and ALCAM. Forms a complex with the ITGA3, ITGB1 and CSPG4. Interacts with LGALS3BP, LYPD3, ZFTRAF1 and UACA. Interacts with TRIM16; this interaction mediates autophagy of damage endomembranes. Interacts with cargo receptor TMED10; the interaction mediates the translocation from the cytoplasm into the ERGIC (endoplasmic reticulum-Golgi intermediate compartment) and thereby secretion. Interacts with and inhibits by binding NCR3/NKp30.

The protein resides in the cytoplasm. Its subcellular location is the nucleus. The protein localises to the secreted. Its function is as follows. Galactose-specific lectin which binds IgE. May mediate with the alpha-3, beta-1 integrin the stimulation by CSPG4 of endothelial cells migration. Together with DMBT1, required for terminal differentiation of columnar epithelial cells during early embryogenesis. In the nucleus: acts as a pre-mRNA splicing factor. Involved in acute inflammatory responses including neutrophil activation and adhesion, chemoattraction of monocytes macrophages, opsonization of apoptotic neutrophils, and activation of mast cells. Together with TRIM16, coordinates the recognition of membrane damage with mobilization of the core autophagy regulators ATG16L1 and BECN1 in response to damaged endomembranes. When secreted, interacts with NK cell-activating receptor NCR3/NKp30 acting as an inhibitory ligand which antagonizes NK cell attack. This is Galectin-3 (LGALS3) from Oryctolagus cuniculus (Rabbit).